Consider the following 511-residue polypeptide: GATOR complex protein NPRL3 (511 aa).

The segment at 37–58 is disordered; the sequence is KPATKAPSKDPQPSSSNPGQCV.

It belongs to the NPR3 family. As to quaternary structure, probably part of the GATOR complex.

Its subcellular location is the lysosome membrane. As a component of the GATOR complex may function in the amino acid-sensing branch of the TORC1 signaling pathway. The protein is GATOR complex protein NPRL3 (nprl-3) of Caenorhabditis elegans.